Consider the following 169-residue polypeptide: MRLLTCDCTFMGQKHSGSVSVEKKNQENDGPPTYEIVFGWSQSFENLMKHRAGQKYFAEFLKGEYSDENILFWQACEELKREKNAEKIEEKARIIYEDFISILSPKEVSLDSRVREIVNTNMGRPSASTFDEAQNQIYTLMQRDSYPRFLASNIYKTVMGTFGIKEEAV.

Residues 39-158 (GWSQSFENLM…FLASNIYKTV (120 aa)) form the RGS domain.

In terms of processing, may be phosphorylated and activated by egl-4. In terms of tissue distribution, expressed in a subset of neurons including ventral cord and head- and tail-ganglia neurons. Also expressed in non-neuronal cells including pharyngeal and uterine muscles.

Its function is as follows. Weakly inhibits G protein signaling in nervous system, interacting preferentially with the G(O) subfamily member goa-1. In vitro, it acts as a GTPase activator of goa-1. Rgs-1 and rgs-2 redundantly adjust signaling when worms are fed to allow rapid induction of egg-laying behavior. Modulates chemotaxis responses by regulating negatively the sensitivity to quinine in ASH sensory neurons. The protein is Regulator of G-protein signaling rgs-2 (rgs-2) of Caenorhabditis elegans.